We begin with the raw amino-acid sequence, 258 residues long: MGITSTTDGDGITTVTVDYPPVNAIPSRGWFELADAVLDAGRNPDTHVVILRAEGRGFNAGVDIKEMQATDGYGALVDANRGCAAAFAAVYDCAVPVVVAVNGFCVGGGIGLVGNADVIVASDDAVFGLPEVDRGALGAATHLARLVPQHMMRTLYYTAQNVTAQQLQHFGSVYEVVPREKLDDTARDIAAKIAAKDTRVIRCAKEAINGIDPVDVKTSYRLEQGYTFELNLAGVSDEHRDEFVETGKPRSHSNNRKG.

Belongs to the enoyl-CoA hydratase/isomerase family.

The catalysed reaction is (7aS)-7a-methyl-1,5-dioxo-2,3,5,6,7,7a-hexahydro-1H-indene-carboxyl-CoA + H2O = (3E)-2-(2-carboxylatoethyl)-3-methyl-6-oxocyclohex-1-ene-1-carboxyl-CoA + H(+). Its pathway is steroid metabolism; cholesterol degradation. In terms of biological role, involved in the final steps of cholesterol and steroid degradation. Catalyzes the hydrolytic ring D opening of (7aS)-7a-methyl-1,5-dioxo-2,3,5,6,7,7a-hexahydro-1H-indene-carboxyl-CoA (HIEC-CoA) to (3E)-2-(2-carboxylatoethyl)-3-methyl-6-oxocyclohex-1-ene-1-carboxyl-CoA (COCHEA-CoA). In Rhodococcus jostii (strain RHA1), this protein is (7aS)-7a-methyl-1,5-dioxo-2,3,5,6,7,7a-hexahydro-1H-indene-carboxyl-CoA hydrolase.